Consider the following 100-residue polypeptide: Enhancer of yellow 2 transcription factor (100 aa).

Belongs to the ENY2 family. In terms of assembly, component of the nuclear pore complex (NPC)-associated AMEX complex (anchoring and mRNA export complex), composed of at least e(y)2 and xmas-2. Component of the SAGA transcription coactivator-HAT complexes, at least composed of Ada2b, e(y)2, Pcaf/Gcn5, Taf10 and Nipped-A/Trrap. Within the SAGA complex, e(y)2, Sgf11, and not/nonstop form an additional subcomplex of SAGA called the DUB module (deubiquitination module). Component of the THO complex, composed of at least e(y)2, HPR1, THO2, THOC5, THOC6 and THOC7. Interacts with e(y)1. Interacts with su(Hw) (via zinc fingers). Interacts with xmas-2; required for localization to the nuclear periphery. Interacts with the nuclear pore complex (NPC).

The protein resides in the nucleus. It is found in the nucleoplasm. Its subcellular location is the cytoplasm. Involved in mRNA export coupled transcription activation by association with both the AMEX and the SAGA complexes. The SAGA complex is a multiprotein complex that activates transcription by remodeling chromatin and mediating histone acetylation and deubiquitination. Within the SAGA complex, participates in a subcomplex that specifically deubiquitinates histone H2B. The SAGA complex is recruited to specific gene promoters by activators, where it is required for transcription. Required for nuclear receptor-mediated transactivation. Involved in transcription elongation by recruiting the THO complex onto nascent mRNA. The AMEX complex functions in docking export-competent ribonucleoprotein particles (mRNPs) to the nuclear entrance of the nuclear pore complex (nuclear basket). AMEX participates in mRNA export and accurate chromatin positioning in the nucleus by tethering genes to the nuclear periphery. The sequence is that of Enhancer of yellow 2 transcription factor from Drosophila ananassae (Fruit fly).